Reading from the N-terminus, the 138-residue chain is Transcription antitermination protein NusB (138 aa).

It belongs to the NusB family.

Involved in transcription antitermination. Required for transcription of ribosomal RNA (rRNA) genes. Binds specifically to the boxA antiterminator sequence of the ribosomal RNA (rrn) operons. The sequence is that of Transcription antitermination protein NusB from Coxiella burnetii (strain CbuK_Q154) (Coxiella burnetii (strain Q154)).